The chain runs to 461 residues: V-type ATP synthase beta chain 1 (461 aa).

It belongs to the ATPase alpha/beta chains family.

Functionally, produces ATP from ADP in the presence of a proton gradient across the membrane. The V-type beta chain is a regulatory subunit. This is V-type ATP synthase beta chain 1 from Clostridium tetani (strain Massachusetts / E88).